The sequence spans 394 residues: Elongation factor Tu (394 aa).

The 195-residue stretch at 10–204 (KPHVNVGTIG…HLDTYIPEPE (195 aa)) folds into the tr-type G domain. A G1 region spans residues 19-26 (GHVDHGKT). 19–26 (GHVDHGKT) contributes to the GTP binding site. T26 is a Mg(2+) binding site. The G2 stretch occupies residues 60–64 (GITIN). The interval 81 to 84 (DCPG) is G3. GTP contacts are provided by residues 81–85 (DCPGH) and 136–139 (NKCD). Residues 136-139 (NKCD) are G4. The tract at residues 174–176 (SAL) is G5.

This sequence belongs to the TRAFAC class translation factor GTPase superfamily. Classic translation factor GTPase family. EF-Tu/EF-1A subfamily. Monomer.

It is found in the cytoplasm. The catalysed reaction is GTP + H2O = GDP + phosphate + H(+). Its function is as follows. GTP hydrolase that promotes the GTP-dependent binding of aminoacyl-tRNA to the A-site of ribosomes during protein biosynthesis. In Aeromonas salmonicida (strain A449), this protein is Elongation factor Tu.